The chain runs to 456 residues: Major facilitator superfamily domain-containing protein 10 (456 aa).

The next 3 helical transmembrane spans lie at 25-45 (VIIV…LLLP), 87-107 (VLFG…SAPL), and 114-136 (YLGR…AVWA). The N-linked (GlcNAc...) asparagine glycan is linked to Asn159. 8 helical membrane passes run 179–199 (AVIG…GAFL), 203–223 (MVPW…FCFL), 278–298 (LVYF…SFLA), 311–328 (KMFF…GTYA), 345–365 (LLLV…TLGL), 366–386 (GLML…TMVS), 403–423 (SLGA…YWLT), and 424–444 (GAQV…LLLW).

The protein belongs to the major facilitator superfamily. Esxpressed in luminal membrane of renal tubules. Expressed at the surface of eosinophils (at protein level).

Its subcellular location is the nucleus inner membrane. The protein resides in the cell membrane. Functionally, probable organic anion transporter which may serve as a transporter for some non-steroidal anti-inflammatory drugs (NSAIDs) as well as other organic anions across the luminal membranes of renal proximal tubules at the final excretion step into the urine. This chain is Major facilitator superfamily domain-containing protein 10 (Mfsd10), found in Mus musculus (Mouse).